Consider the following 319-residue polypeptide: MKKSITTLDLNLLLCLQLLMQERSVTKAAKRMNVTPSAVSKSLAKLRAWFDDPLFVNSPLGLSPTPLMVSMEQNLAEWMQMSNLLLDKPHHQTPRGLKFELAAESPLMMIMLNALSKRIYQRYPQATIKLRNWDYDSLDAITRGEVDIGFSGRESHPRSRELLSSLPLAIDYEVLFSDVPCVWLRKDHPALHEAWNLDTFLRYPHISICWEQSDTWALDNVLQELGRERTIAMSLPEFEQSLFMAAQPDNLLLATAPRYCQYYNQLHQLPLVALPLPFDESQQKKLEVPFTLLWHKRNSRNPKIVWLRETIKNLYASMA.

Positions 8 to 65 constitute an HTH lysR-type domain; that stretch reads LDLNLLLCLQLLMQERSVTKAAKRMNVTPSAVSKSLAKLRAWFDDPLFVNSPLGLSPT. A DNA-binding region (H-T-H motif) is located at residues 25–44; the sequence is VTKAAKRMNVTPSAVSKSLA.

It belongs to the LysR transcriptional regulatory family.

Functionally, involved in anaerobic NO protection. The sequence is that of HTH-type transcriptional regulator YidZ from Escherichia coli O6:H1 (strain CFT073 / ATCC 700928 / UPEC).